The primary structure comprises 363 residues: Aminomethyltransferase (363 aa).

It belongs to the GcvT family. As to quaternary structure, the glycine cleavage system is composed of four proteins: P, T, L and H.

The enzyme catalyses N(6)-[(R)-S(8)-aminomethyldihydrolipoyl]-L-lysyl-[protein] + (6S)-5,6,7,8-tetrahydrofolate = N(6)-[(R)-dihydrolipoyl]-L-lysyl-[protein] + (6R)-5,10-methylene-5,6,7,8-tetrahydrofolate + NH4(+). The glycine cleavage system catalyzes the degradation of glycine. This Saccharophagus degradans (strain 2-40 / ATCC 43961 / DSM 17024) protein is Aminomethyltransferase.